The primary structure comprises 90 residues: MDIKLINIGFGNIVSANRIIAIVSPESAPIKRIITEARDRGMLIDATYGRRTRAVIITDSDHVILSAVQPETVANRLVSKEAAQVDEPTD.

Belongs to the RemA family.

This is Putative regulatory protein Dred_1699 from Desulforamulus reducens (strain ATCC BAA-1160 / DSM 100696 / MI-1) (Desulfotomaculum reducens).